The chain runs to 478 residues: Protein nucleotidyltransferase YdiU (478 aa).

ATP contacts are provided by Gly84, Gly86, Arg87, Lys107, Asp119, Gly120, Arg170, and Arg177. Asp246 serves as the catalytic Proton acceptor. Mg(2+) is bound by residues Asn247 and Asp256. Asp256 is a binding site for ATP.

It belongs to the SELO family. Mg(2+) is required as a cofactor. The cofactor is Mn(2+).

It carries out the reaction L-seryl-[protein] + ATP = 3-O-(5'-adenylyl)-L-seryl-[protein] + diphosphate. The catalysed reaction is L-threonyl-[protein] + ATP = 3-O-(5'-adenylyl)-L-threonyl-[protein] + diphosphate. The enzyme catalyses L-tyrosyl-[protein] + ATP = O-(5'-adenylyl)-L-tyrosyl-[protein] + diphosphate. It catalyses the reaction L-histidyl-[protein] + UTP = N(tele)-(5'-uridylyl)-L-histidyl-[protein] + diphosphate. It carries out the reaction L-seryl-[protein] + UTP = O-(5'-uridylyl)-L-seryl-[protein] + diphosphate. The catalysed reaction is L-tyrosyl-[protein] + UTP = O-(5'-uridylyl)-L-tyrosyl-[protein] + diphosphate. Functionally, nucleotidyltransferase involved in the post-translational modification of proteins. It can catalyze the addition of adenosine monophosphate (AMP) or uridine monophosphate (UMP) to a protein, resulting in modifications known as AMPylation and UMPylation. This chain is Protein nucleotidyltransferase YdiU, found in Escherichia coli O7:K1 (strain IAI39 / ExPEC).